Reading from the N-terminus, the 168-residue chain is ATP synthase subunit b (168 aa).

The helical transmembrane segment at 9 to 29 (SIPFGTIAYTLFIFLLLLVML) threads the bilayer.

The protein belongs to the ATPase B chain family. F-type ATPases have 2 components, F(1) - the catalytic core - and F(0) - the membrane proton channel. F(1) has five subunits: alpha(3), beta(3), gamma(1), delta(1), epsilon(1). F(0) has three main subunits: a(1), b(2) and c(10-14). The alpha and beta chains form an alternating ring which encloses part of the gamma chain. F(1) is attached to F(0) by a central stalk formed by the gamma and epsilon chains, while a peripheral stalk is formed by the delta and b chains.

It is found in the cell membrane. Its function is as follows. F(1)F(0) ATP synthase produces ATP from ADP in the presence of a proton or sodium gradient. F-type ATPases consist of two structural domains, F(1) containing the extramembraneous catalytic core and F(0) containing the membrane proton channel, linked together by a central stalk and a peripheral stalk. During catalysis, ATP synthesis in the catalytic domain of F(1) is coupled via a rotary mechanism of the central stalk subunits to proton translocation. Component of the F(0) channel, it forms part of the peripheral stalk, linking F(1) to F(0). In Bacillus mycoides (strain KBAB4) (Bacillus weihenstephanensis), this protein is ATP synthase subunit b.